The chain runs to 100 residues: Urease subunit gamma (100 aa).

Belongs to the urease gamma subunit family. Heterotrimer of UreA (gamma), UreB (beta) and UreC (alpha) subunits. Three heterotrimers associate to form the active enzyme.

Its subcellular location is the cytoplasm. It catalyses the reaction urea + 2 H2O + H(+) = hydrogencarbonate + 2 NH4(+). Its pathway is nitrogen metabolism; urea degradation; CO(2) and NH(3) from urea (urease route): step 1/1. The protein is Urease subunit gamma of Haemophilus influenzae (strain ATCC 51907 / DSM 11121 / KW20 / Rd).